Reading from the N-terminus, the 347-residue chain is Spermatogenesis associated 6-like protein (347 aa).

A disordered region spans residues 115-199; sequence SKSHGQRVQA…ENNLEHCSKK (85 aa). Positions 116–125 are enriched in polar residues; the sequence is KSHGQRVQAT. Over residues 153 to 166 the composition is skewed to basic residues; sequence LHLHRPTQRNHGKS. Residues 170–183 show a composition bias toward basic and acidic residues; the sequence is PGERKPPFVVRHVD. Phosphoserine is present on residues Ser218 and Ser221. The tract at residues 234 to 285 is disordered; sequence ERIVLKSQPPPPVDSSESRKPSLSHQGDASLHTETSVTTSQLSRPPSPLNQP. Residues 254-277 show a composition bias toward polar residues; sequence PSLSHQGDASLHTETSVTTSQLSR.

This sequence belongs to the SPATA6 family.

The protein is Spermatogenesis associated 6-like protein (Spata6l) of Mus musculus (Mouse).